Consider the following 178-residue polypeptide: RNA pyrophosphohydrolase (178 aa).

Residues 18 to 171 (PYRPCVGLMV…KRKVYEQVVA (154 aa)) form the Nudix hydrolase domain. The Nudix box motif lies at 59 to 80 (GGIDKGEDPAQAALRELYEETG).

The protein belongs to the Nudix hydrolase family. RppH subfamily. The cofactor is a divalent metal cation.

Its function is as follows. Accelerates the degradation of transcripts by removing pyrophosphate from the 5'-end of triphosphorylated RNA, leading to a more labile monophosphorylated state that can stimulate subsequent ribonuclease cleavage. This is RNA pyrophosphohydrolase from Brucella melitensis biotype 2 (strain ATCC 23457).